The primary structure comprises 501 residues: Ribose import ATP-binding protein RbsA (501 aa).

ABC transporter domains lie at 5–241 (LQLK…VGRK) and 252–495 (APGE…VGKL). An ATP-binding site is contributed by 37–44 (GENGAGKS).

Belongs to the ABC transporter superfamily. Ribose importer (TC 3.A.1.2.1) family. The complex is composed of an ATP-binding protein (RbsA), two transmembrane proteins (RbsC) and a solute-binding protein (RbsB).

It localises to the cell inner membrane. The catalysed reaction is D-ribose(out) + ATP + H2O = D-ribose(in) + ADP + phosphate + H(+). In terms of biological role, part of the ABC transporter complex RbsABC involved in ribose import. Responsible for energy coupling to the transport system. The chain is Ribose import ATP-binding protein RbsA from Salmonella typhi.